A 669-amino-acid polypeptide reads, in one-letter code: DNA ligase (669 aa).

Residues 34–38 (DAEYD), 83–84 (SL), and Glu114 each bind NAD(+). Lys116 (N6-AMP-lysine intermediate) is an active-site residue. NAD(+)-binding residues include Arg137, Glu171, Lys287, and Lys311. Zn(2+) is bound by residues Cys405, Cys408, Cys423, and Cys428. Residues 591–669 (NVESYFAGKT…EERFLQELNK (79 aa)) enclose the BRCT domain.

This sequence belongs to the NAD-dependent DNA ligase family. LigA subfamily. It depends on Mg(2+) as a cofactor. Requires Mn(2+) as cofactor.

It catalyses the reaction NAD(+) + (deoxyribonucleotide)n-3'-hydroxyl + 5'-phospho-(deoxyribonucleotide)m = (deoxyribonucleotide)n+m + AMP + beta-nicotinamide D-nucleotide.. Its function is as follows. DNA ligase that catalyzes the formation of phosphodiester linkages between 5'-phosphoryl and 3'-hydroxyl groups in double-stranded DNA using NAD as a coenzyme and as the energy source for the reaction. It is essential for DNA replication and repair of damaged DNA. In Bacillus cereus (strain AH820), this protein is DNA ligase.